Reading from the N-terminus, the 62-residue chain is Large ribosomal subunit protein bL32 (62 aa).

Residues 1–19 (MAVPKRKTSKTRRDKRRAS) show a composition bias toward basic residues. The interval 1-20 (MAVPKRKTSKTRRDKRRASS) is disordered.

The protein belongs to the bacterial ribosomal protein bL32 family.

The polypeptide is Large ribosomal subunit protein bL32 (Finegoldia magna (strain ATCC 29328 / DSM 20472 / WAL 2508) (Peptostreptococcus magnus)).